We begin with the raw amino-acid sequence, 632 residues long: DNA polymerase eta (632 aa).

Residues 26 to 309 enclose the UmuC domain; it reads IAHIDMNAFF…FEITSFWTLG (284 aa). Positions 30 and 155 each coordinate Mg(2+). The segment at 545–580 adopts a UBZ3-type zinc-finger fold; sequence EKTPKLECCKYQVTFTDQKALQEHADYHLALKLSEG. Residues Cys-552, Cys-553, His-568, and His-572 each coordinate Zn(2+). A disordered region spans residues 598-632; the sequence is LLFSRKRPNSQHTATPQKKQVTSSKNILSFFTRKK. Over residues 607 to 626 the composition is skewed to polar residues; the sequence is SQHTATPQKKQVTSSKNILS. A POL30-binding region spans residues 625 to 632; the sequence is LSFFTRKK.

The protein belongs to the DNA polymerase type-Y family. As to quaternary structure, interacts with POL30. This interaction is essential for the polymerase eta function.

Its subcellular location is the nucleus. It carries out the reaction DNA(n) + a 2'-deoxyribonucleoside 5'-triphosphate = DNA(n+1) + diphosphate. Its function is as follows. DNA polymerase specifically involved in DNA repair. Plays an important role in translesion synthesis, where the normal high fidelity DNA polymerases cannot proceed and DNA synthesis stalls. Plays an important role in the repair of UV-induced pyrimidine dimers. Depending on the context, it inserts the correct base, but causes frequent base transitions and transversions. Efficiently incorporates nucleotides opposite to other UV or oxidative DNA damages like O(6)-methylguanine, 7,8-dihydro-8-oxoguanine, 2,6-diamino-4-hydroxy-5-formamidopyrimidine of 2'-deoxyguanosine (FaPydG), or p-benzoquinone DNA adducts. The polypeptide is DNA polymerase eta (RAD30) (Saccharomyces cerevisiae (strain ATCC 204508 / S288c) (Baker's yeast)).